The primary structure comprises 371 residues: Cysteine proteinase EP-B 1 (371 aa).

The signal sequence occupies residues 1-28 (MGLLSKKLLVASMVAAVLAVAAVELCSA). Positions 29–133 (IPMEDKDLES…FMYAALNVSD (105 aa)) are cleaved as a propeptide — activation peptide. A glycan (N-linked (GlcNAc...) asparagine) is linked at N130. 3 cysteine pairs are disulfide-bonded: C155–C197, C189–C230, and C291–C343. Residue C158 is part of the active site. Active-site residues include H297 and N318.

It belongs to the peptidase C1 family.

This Hordeum vulgare (Barley) protein is Cysteine proteinase EP-B 1.